The following is a 240-amino-acid chain: Uridylate kinase (240 aa).

12–15 contacts ATP; the sequence is KLSG. Positions 20–25 are involved in allosteric activation by GTP; the sequence is GEQGFG. Gly54 is a binding site for UMP. Gly55 and Arg59 together coordinate ATP. UMP contacts are provided by residues Asp74 and 135 to 142; that span reads TGNPYFST. 3 residues coordinate ATP: Asn163, Tyr169, and Asp172.

It belongs to the UMP kinase family. As to quaternary structure, homohexamer.

Its subcellular location is the cytoplasm. It carries out the reaction UMP + ATP = UDP + ADP. It functions in the pathway pyrimidine metabolism; CTP biosynthesis via de novo pathway; UDP from UMP (UMPK route): step 1/1. With respect to regulation, allosterically activated by GTP. Inhibited by UTP. Its function is as follows. Catalyzes the reversible phosphorylation of UMP to UDP. In Bacillus cereus (strain ATCC 14579 / DSM 31 / CCUG 7414 / JCM 2152 / NBRC 15305 / NCIMB 9373 / NCTC 2599 / NRRL B-3711), this protein is Uridylate kinase.